Here is a 490-residue protein sequence, read N- to C-terminus: GTPase Der (490 aa).

EngA-type G domains follow at residues 3 to 166 (PVVA…MEDL) and 203 to 376 (IKLA…DSST). Residues 9 to 16 (GRPNVGKS), 56 to 60 (DTGGI), 118 to 121 (NKTD), 209 to 216 (GRPNVGKS), 256 to 260 (DTAGV), and 321 to 324 (NKWD) contribute to the GTP site. The KH-like domain maps to 377 to 461 (RRVGTSMLTR…PIRIQFKEGE (85 aa)).

This sequence belongs to the TRAFAC class TrmE-Era-EngA-EngB-Septin-like GTPase superfamily. EngA (Der) GTPase family. Associates with the 50S ribosomal subunit.

Functionally, GTPase that plays an essential role in the late steps of ribosome biogenesis. This is GTPase Der from Escherichia fergusonii (strain ATCC 35469 / DSM 13698 / CCUG 18766 / IAM 14443 / JCM 21226 / LMG 7866 / NBRC 102419 / NCTC 12128 / CDC 0568-73).